An 868-amino-acid chain; its full sequence is Leucine--tRNA ligase (868 aa).

A 'HIGH' region motif is present at residues 42-52; the sequence is PYPSGKLHMGH. The short motif at 627–631 is the 'KMSKS' region element; the sequence is KMSKS. Lysine 630 serves as a coordination point for ATP.

The protein belongs to the class-I aminoacyl-tRNA synthetase family.

It is found in the cytoplasm. The catalysed reaction is tRNA(Leu) + L-leucine + ATP = L-leucyl-tRNA(Leu) + AMP + diphosphate. This Pseudomonas syringae pv. tomato (strain ATCC BAA-871 / DC3000) protein is Leucine--tRNA ligase.